The chain runs to 491 residues: Cobyric acid synthase (491 aa).

Residues 250–441 enclose the GATase cobBQ-type domain; that stretch reads DLQITVVRLP…LHGLFDNGPW (192 aa). The active-site Nucleophile is cysteine 331. Histidine 433 is a catalytic residue.

This sequence belongs to the CobB/CobQ family. CobQ subfamily.

It functions in the pathway cofactor biosynthesis; adenosylcobalamin biosynthesis. In terms of biological role, catalyzes amidations at positions B, D, E, and G on adenosylcobyrinic A,C-diamide. NH(2) groups are provided by glutamine, and one molecule of ATP is hydrogenolyzed for each amidation. This chain is Cobyric acid synthase, found in Trichormus variabilis (strain ATCC 29413 / PCC 7937) (Anabaena variabilis).